Here is a 700-residue protein sequence, read N- to C-terminus: DNA ligase (700 aa).

Residues 61–65, 110–111, and E141 each bind NAD(+); these read DAEYD and SL. Residue K143 is the N6-AMP-lysine intermediate of the active site. Residues R164, E202, K321, and K345 each contribute to the NAD(+) site. Residues C439, C442, C457, and C462 each contribute to the Zn(2+) site. Residues 619–700 form the BRCT domain; sequence AVSNKLAGLQ…EFLRLLEDSK (82 aa).

The protein belongs to the NAD-dependent DNA ligase family. LigA subfamily. Mg(2+) serves as cofactor. Mn(2+) is required as a cofactor.

The enzyme catalyses NAD(+) + (deoxyribonucleotide)n-3'-hydroxyl + 5'-phospho-(deoxyribonucleotide)m = (deoxyribonucleotide)n+m + AMP + beta-nicotinamide D-nucleotide.. In terms of biological role, DNA ligase that catalyzes the formation of phosphodiester linkages between 5'-phosphoryl and 3'-hydroxyl groups in double-stranded DNA using NAD as a coenzyme and as the energy source for the reaction. It is essential for DNA replication and repair of damaged DNA. In Hydrogenobaculum sp. (strain Y04AAS1), this protein is DNA ligase.